Here is a 1575-residue protein sequence, read N- to C-terminus: Ovochymase (1575 aa).

An N-terminal signal peptide occupies residues 1-19 (MIVTFVALALSCCTPQVTA). The region spanning 36-280 (IVGGEMAKLG…YSSWIANYTQ (245 aa)) is the Peptidase S1 1 domain. A disulfide bridge connects residues Cys61 and Cys77. Catalysis depends on charge relay system residues His76 and Asp132. 3 disulfides stabilise this stretch: Cys166/Cys233, Cys199/Cys212, and Cys223/Cys256. Ser227 functions as the Charge relay system in the catalytic mechanism. Asn277 and Asn303 each carry an N-linked (GlcNAc...) asparagine glycan. 4 disulfide bridges follow: Cys300–Cys330, Cys358–Cys386, Cys432–Cys460, and Cys486–Cys507. 2 consecutive CUB domains span residues 300 to 423 (CSSN…FHAV) and 432 to 545 (CGGI…YYFS). Residues Asn497, Asn513, and Asn549 are each glycosylated (N-linked (GlcNAc...) asparagine). Residues 575 to 810 (IVNGDIAIAG…YIDWIIATAN (236 aa)) enclose the Peptidase S1 2 domain. A disulfide bridge links Cys602 with Cys618. Active-site charge relay system residues include His617 and Asp665. 3 disulfide bridges follow: Cys700-Cys766, Cys730-Cys745, and Cys756-Cys786. N-linked (GlcNAc...) asparagine glycosylation occurs at Asn748. The active-site Charge relay system is Ser760. An N-linked (GlcNAc...) asparagine glycan is attached at Asn810. Cystine bridges form between Cys830-Cys859, Cys889-Cys913, Cys956-Cys984, Cys1012-Cys1034, Cys1080-Cys1108, Cys1135-Cys1158, and Cys1221-Cys1246. CUB domains follow at residues 830 to 949 (CIQL…YRLE), 956 to 1070 (CGQL…FVEL), 1080 to 1197 (CGGV…YTAV), and 1221 to 1341 (CQDS…YKLM). N-linked (GlcNAc...) asparagine glycans are attached at residues Asn968, Asn1027, Asn1087, and Asn1090. Asn1273 is a glycosylation site (N-linked (GlcNAc...) asparagine). The Peptidase S1 3 domain maps to 1314–1575 (YNGGEISMLF…FLKWITKIIQ (262 aa)). Cystine bridges form between Cys1376/Cys1392 and Cys1493/Cys1507. Residue Asn1511 is glycosylated (N-linked (GlcNAc...) asparagine).

Belongs to the peptidase S1 family. Expressed in the testis and ovary. Expressed in the gonads and gametes. Expressed in the follicle cells covering the vitelline coat of ovarian egg.

It localises to the secreted. May be responsible for elevation of the vitelline coat at the late developmental stage of oogenesis and during fertilization in ovarian eggs. The protein is Ovochymase of Halocynthia roretzi (Sea squirt).